Here is a 333-residue protein sequence, read N- to C-terminus: Geminin coiled-coil domain-containing protein 1 (333 aa).

Residues Gln-83–Thr-118 are a coiled coil. A compositionally biased stretch (basic residues) spans Lys-145–Arg-154. The tract at residues Lys-145–Thr-165 is disordered.

Belongs to the GEMC1 family. Highly phosphorylated by CDK2; stimulates initiation of DNA replication.

Its subcellular location is the nucleus. Its function is as follows. Regulator of DNA replication. Promotes initiation of chromosomal DNA replication by mediating TOPBP1- and CDK2-dependent recruitment of CDC45L onto replication origins. This chain is Geminin coiled-coil domain-containing protein 1 (Gmnc), found in Mus musculus (Mouse).